The sequence spans 1373 residues: DNA-directed RNA polymerase subunit beta (1373 aa).

The protein belongs to the RNA polymerase beta chain family. As to quaternary structure, the RNAP catalytic core consists of 2 alpha, 1 beta, 1 beta' and 1 omega subunit. When a sigma factor is associated with the core the holoenzyme is formed, which can initiate transcription.

The enzyme catalyses RNA(n) + a ribonucleoside 5'-triphosphate = RNA(n+1) + diphosphate. In terms of biological role, DNA-dependent RNA polymerase catalyzes the transcription of DNA into RNA using the four ribonucleoside triphosphates as substrates. This Rickettsia canadensis (strain McKiel) protein is DNA-directed RNA polymerase subunit beta.